Consider the following 357-residue polypeptide: Sulfate/thiosulfate import ATP-binding protein CysA (357 aa).

In terms of domain architecture, ABC transporter spans 3–237 (IQIQGVSKQY…PASPFVYDFL (235 aa)). 35-42 (GPSGSGKT) is an ATP binding site.

Belongs to the ABC transporter superfamily. Sulfate/tungstate importer (TC 3.A.1.6) family. The complex is composed of two ATP-binding proteins (CysA), two transmembrane proteins (CysT and CysW) and a solute-binding protein (CysP).

The protein resides in the cell membrane. It catalyses the reaction sulfate(out) + ATP + H2O = sulfate(in) + ADP + phosphate + H(+). The enzyme catalyses thiosulfate(out) + ATP + H2O = thiosulfate(in) + ADP + phosphate + H(+). In terms of biological role, part of the ABC transporter complex CysAWTP involved in sulfate/thiosulfate import. Responsible for energy coupling to the transport system. The sequence is that of Sulfate/thiosulfate import ATP-binding protein CysA from Bacillus cereus (strain ATCC 14579 / DSM 31 / CCUG 7414 / JCM 2152 / NBRC 15305 / NCIMB 9373 / NCTC 2599 / NRRL B-3711).